A 361-amino-acid chain; its full sequence is Phospho-N-acetylmuramoyl-pentapeptide-transferase (361 aa).

10 consecutive transmembrane segments (helical) span residues Tyr21–Gly41, Thr72–Val92, Leu94–Phe114, Leu135–His155, Leu169–Ser189, Gly200–Ser220, Leu240–Pro260, Met263–Val283, Leu289–Val309, and Thr338–Leu358.

This sequence belongs to the glycosyltransferase 4 family. MraY subfamily. Mg(2+) serves as cofactor.

It is found in the cell inner membrane. The catalysed reaction is UDP-N-acetyl-alpha-D-muramoyl-L-alanyl-gamma-D-glutamyl-meso-2,6-diaminopimeloyl-D-alanyl-D-alanine + di-trans,octa-cis-undecaprenyl phosphate = di-trans,octa-cis-undecaprenyl diphospho-N-acetyl-alpha-D-muramoyl-L-alanyl-D-glutamyl-meso-2,6-diaminopimeloyl-D-alanyl-D-alanine + UMP. It functions in the pathway cell wall biogenesis; peptidoglycan biosynthesis. In terms of biological role, catalyzes the initial step of the lipid cycle reactions in the biosynthesis of the cell wall peptidoglycan: transfers peptidoglycan precursor phospho-MurNAc-pentapeptide from UDP-MurNAc-pentapeptide onto the lipid carrier undecaprenyl phosphate, yielding undecaprenyl-pyrophosphoryl-MurNAc-pentapeptide, known as lipid I. In Rhodospirillum centenum (strain ATCC 51521 / SW), this protein is Phospho-N-acetylmuramoyl-pentapeptide-transferase.